Reading from the N-terminus, the 540-residue chain is Phosphatidylinositol 4-phosphate 5-kinase type-1 beta (540 aa).

The disordered stretch occupies residues 1–23 (MSSVTENGDVTAGKPNEEKTYKK). The 371-residue stretch at 25–395 (TSSAIKGAIQ…RFLKFMNTRV (371 aa)) folds into the PIPK domain.

The protein resides in the cytoplasm. It localises to the cytosol. Its subcellular location is the cell membrane. It is found in the endomembrane system. It carries out the reaction a 1,2-diacyl-sn-glycero-3-phospho-(1D-myo-inositol 4-phosphate) + ATP = a 1,2-diacyl-sn-glycero-3-phospho-(1D-myo-inositol-4,5-bisphosphate) + ADP + H(+). The enzyme catalyses 1-octadecanoyl-2-(5Z,8Z,11Z,14Z)-eicosatetraenoyl-sn-glycero-3-phospho-1D-myo-inositol 4-phosphate + ATP = 1-octadecanoyl-2-(5Z,8Z,11Z,14Z)-eicosatetraenoyl-sn-glycero-3-phospho-1D-myo-inositol 4,5-bisphosphate + ADP + H(+). The catalysed reaction is 1-octadecanoyl-2-(9Z)-octadecenoyl-sn-glycero-3-phospho-1D-myo-inositol 4-phosphate + ATP = 1-octadecanoyl-2-(9Z)-octadecenoyl-sn-glycero-3-phospho-1D-myo-inositol 4,5-bisphosphate + ADP + H(+). It catalyses the reaction 1-octadecanoyl-2-(9Z)-octadecenoyl-sn-glycero-3-phospho-1D-myo-inositol + ATP = 1-octadecanoyl-2-(9Z)-octadecenoyl-sn-glycero-3-phospho-1D-myo-inositol 5-phosphate + ADP + H(+). It carries out the reaction 1-octadecanoyl-2-(9Z,12Z)-octadecadienoyl-sn-glycero-3-phospho-1D-myo-inositol + ATP = 1-octadecanoyl-2-(9Z,12Z)-octadecadienoyl-sn-glycero-3-phospho-1D-myo-inositol 5-phosphate + ADP + H(+). The enzyme catalyses 1-octadecanoyl-2-(5Z,8Z,11Z,14Z-eicosatetraenoyl)-sn-glycero-3-phospho-(1D-myo-inositol) + ATP = 1-octadecanoyl-2-(5Z,8Z,11Z,14Z)-eicosatetraenoyl-sn-glycero-3-phospho-1D-myo-inositol 5-phosphate + ADP + H(+). The catalysed reaction is 1,2-di-(9Z,12Z)-octadecadienoyl-sn-glycero-3-phospho-1D-myo-inositol + ATP = 1,2-di(9Z,12Z)-octadecadienoyl-sn-glycero-3-phospho-1D-myo-inositol 5-phosphate + ADP + H(+). Catalyzes the phosphorylation of phosphatidylinositol 4-phosphate (PtdIns(4)P/PI4P) to form phosphatidylinositol 4,5-bisphosphate (PtdIns(4,5)P2/PIP2), a lipid second messenger that regulates several cellular processes such as signal transduction, vesicle trafficking, actin cytoskeleton dynamics, cell adhesion, and cell motility. PtdIns(4,5)P2 can directly act as a second messenger or can be utilized as a precursor to generate other second messengers: inositol 1,4,5-trisphosphate (IP3), diacylglycerol (DAG) or phosphatidylinositol-3,4,5-trisphosphate (PtdIns(3,4,5)P3/PIP3). This is Phosphatidylinositol 4-phosphate 5-kinase type-1 beta (PIP5K1B) from Gallus gallus (Chicken).